Reading from the N-terminus, the 420-residue chain is Structure-specific endonuclease subunit SLX1 homolog (420 aa).

The 88-residue stretch at 19–106 (SSDNTYPWQN…QHPLKSRRLR (88 aa)) folds into the GIY-YIG domain. Disordered regions lie at residues 237–306 (SVEE…AAVN) and 311–330 (DDSA…DDVA). Residues 247-266 (PSSCSVPPSTGSSAAPTPGA) show a composition bias toward low complexity. Basic and acidic residues predominate over residues 279–301 (VDPRLDSDDRDDNHQFESPDNHE). Positions 311-327 (DDSADDGTTDGNEDGPD) are enriched in acidic residues. The SLX1-type zinc-finger motif lies at 348–405 (CGHCHQSVYQELCIVCLNATCTYRAHLLCAAQAAVHPLGQSSPSETRLVPLRHSCPRC).

It belongs to the SLX1 family. As to quaternary structure, forms a heterodimer with a member of the SLX4 family. A divalent metal cation is required as a cofactor.

It localises to the nucleus. Functionally, catalytic subunit of a heterodimeric structure-specific endonuclease that resolves DNA secondary structures generated during DNA repair and recombination. Has endonuclease activity towards branched DNA substrates, introducing single-strand cuts in duplex DNA close to junctions with ss-DNA. The protein is Structure-specific endonuclease subunit SLX1 homolog of Monosiga brevicollis (Choanoflagellate).